Reading from the N-terminus, the 192-residue chain is Ribose 1,5-bisphosphate phosphokinase PhnN (192 aa).

This sequence belongs to the ribose 1,5-bisphosphokinase family.

The catalysed reaction is alpha-D-ribose 1,5-bisphosphate + ATP = 5-phospho-alpha-D-ribose 1-diphosphate + ADP. It functions in the pathway metabolic intermediate biosynthesis; 5-phospho-alpha-D-ribose 1-diphosphate biosynthesis; 5-phospho-alpha-D-ribose 1-diphosphate from D-ribose 5-phosphate (route II): step 3/3. Catalyzes the phosphorylation of ribose 1,5-bisphosphate to 5-phospho-D-ribosyl alpha-1-diphosphate (PRPP). In Achromobacter xylosoxidans (strain A8), this protein is Ribose 1,5-bisphosphate phosphokinase PhnN.